Consider the following 361-residue polypeptide: D-alanine--D-alanine ligase (361 aa).

One can recognise an ATP-grasp domain in the interval 140–345 (KHLFAQAGLD…YAELIEKLVA (206 aa)). Residue 173–228 (EGELGYPCFVKPANLGSSVGISKCRSREELDQAFELAFQYDRKIVVEEGVIGREIE) participates in ATP binding. 3 residues coordinate Mg(2+): D299, E312, and N314.

Belongs to the D-alanine--D-alanine ligase family. Mg(2+) is required as a cofactor. It depends on Mn(2+) as a cofactor.

The protein localises to the cytoplasm. It catalyses the reaction 2 D-alanine + ATP = D-alanyl-D-alanine + ADP + phosphate + H(+). It participates in cell wall biogenesis; peptidoglycan biosynthesis. Functionally, cell wall formation. The protein is D-alanine--D-alanine ligase of Bacillus licheniformis (strain ATCC 14580 / DSM 13 / JCM 2505 / CCUG 7422 / NBRC 12200 / NCIMB 9375 / NCTC 10341 / NRRL NRS-1264 / Gibson 46).